Reading from the N-terminus, the 306-residue chain is Tyrosine recombinase XerD (306 aa).

The Core-binding (CB) domain maps to 1-83 (MGFIAQFLEM…TIKSYYEFLI (83 aa)). The Tyr recombinase domain maps to 104–299 (KLPEILSIAQ…QTNHLKKALL (196 aa)). Active-site residues include Arg145, Lys176, His251, Arg254, and His277. Tyr286 serves as the catalytic O-(3'-phospho-DNA)-tyrosine intermediate.

The protein belongs to the 'phage' integrase family. XerD subfamily. Forms a cyclic heterotetrameric complex composed of two molecules of XerC and two molecules of XerD.

The protein localises to the cytoplasm. Functionally, site-specific tyrosine recombinase, which acts by catalyzing the cutting and rejoining of the recombining DNA molecules. The XerC-XerD complex is essential to convert dimers of the bacterial chromosome into monomers to permit their segregation at cell division. It also contributes to the segregational stability of plasmids. The chain is Tyrosine recombinase XerD from Rickettsia conorii (strain ATCC VR-613 / Malish 7).